The primary structure comprises 191 residues: Cytochrome c oxidase subunit 6b-1 (191 aa).

Residues 1–14 (MADAVNAQTPSLSE) are compositionally biased toward polar residues. The segment at 1–126 (MADAVNAQTP…IKLETAPADF (126 aa)) is disordered. A2 is modified (N-acetylalanine). Basic and acidic residues-rich tracts occupy residues 16-37 (YHLE…KEVA) and 45-56 (EEVKTEQAKEES). A compositionally biased stretch (low complexity) spans 72 to 98 (APESTEVASEAPAAAEDNAEETPAAAE). The span at 99 to 114 (ENNDENASEEVAEETP) shows a compositional bias: acidic residues. A CHCH domain is found at 134–177 (TRHCFTRYVEYHRCVAAKGDDAPECDKFAKFYRSLCPSEWVDRW). A Cx9C motif motif is present at residues 137–147 (CFTRYVEYHRC). 2 disulfides stabilise this stretch: C137–C169 and C147–C158. Positions 158-169 (CDKFAKFYRSLC) match the Cx10C motif motif.

The protein belongs to the cytochrome c oxidase subunit 6B (TC 3.D.4.8) family. In terms of tissue distribution, expressed in the whole plant.

Its subcellular location is the mitochondrion. This protein is one of the nuclear-coded polypeptide chains of cytochrome c oxidase, the terminal oxidase in mitochondrial electron transport. This protein may be one of the heme-binding subunits of the oxidase. The protein is Cytochrome c oxidase subunit 6b-1 (COX6B-1) of Arabidopsis thaliana (Mouse-ear cress).